Consider the following 322-residue polypeptide: MSSKSKSIGIIGAPFSKGQPRGGVEEGPTVLRKAGLLEKLKEQEHDVTDYGDLSFADVPNDSPFHIVKNPRAVGRANEQLAGAVAEIKKNGRISLVLGGDHSLAIGSISGHASVCPDLAVIWVDAHTDINTPLTTTSGNLHGQPVSFLLKELKGKIPDVPGFSWVTPCISAKDIVYIGLRDVDPGEHYIVKTLGIKYFSMTEVDKLGIGKVMEETLCYLLGRKKRPIHLSFDVDGLDPSFTPATGTPVAGGLSYREGIYITEAIHKTGLLSGLDIMEVNPSLGKTPEEVTRTVNTAVALTLASFGVAREGNHKPIDYLHPPK.

Residues 1-12 (MSSKSKSIGIIG) show a composition bias toward low complexity. A disordered region spans residues 1 to 26 (MSSKSKSIGIIGAPFSKGQPRGGVEE). Residue Ser7 is modified to Phosphoserine. Lys17 is modified (N6-succinyllysine). Residue Ser62 is modified to Phosphoserine. Mn(2+) contacts are provided by His101, Asp124, His126, and Asp128. Residues 126-130 (HTDIN) and 137-139 (SGN) contribute to the substrate site. Residue Ser163 is modified to Phosphoserine. Asp183 contributes to the substrate binding site. The Mn(2+) site is built by Asp232 and Asp234. Positions 246 and 277 each coordinate substrate.

Belongs to the arginase family. Homotrimer. Interacts with CMTM6. It depends on Mn(2+) as a cofactor.

The protein localises to the cytoplasm. The catalysed reaction is L-arginine + H2O = urea + L-ornithine. It functions in the pathway nitrogen metabolism; urea cycle; L-ornithine and urea from L-arginine: step 1/1. The sequence is that of Arginase-1 (ARG1) from Oryctolagus cuniculus (Rabbit).